We begin with the raw amino-acid sequence, 382 residues long: tRNA-specific 2-thiouridylase MnmA (382 aa).

ATP-binding positions include 18–25 and Leu44; that span reads AMSGGVDS. The Nucleophile role is filled by Cys112. An intrachain disulfide couples Cys112 to Cys209. Gly136 provides a ligand contact to ATP. The tract at residues 159-161 is interaction with tRNA; the sequence is RDQ. Cys209 serves as the catalytic Cysteine persulfide intermediate.

The protein belongs to the MnmA/TRMU family.

It localises to the cytoplasm. It carries out the reaction S-sulfanyl-L-cysteinyl-[protein] + uridine(34) in tRNA + AH2 + ATP = 2-thiouridine(34) in tRNA + L-cysteinyl-[protein] + A + AMP + diphosphate + H(+). Its function is as follows. Catalyzes the 2-thiolation of uridine at the wobble position (U34) of tRNA, leading to the formation of s(2)U34. The chain is tRNA-specific 2-thiouridylase MnmA from Methylobacterium nodulans (strain LMG 21967 / CNCM I-2342 / ORS 2060).